A 473-amino-acid polypeptide reads, in one-letter code: GDP-fucose protein O-fucosyltransferase 2 (473 aa).

Positions 1 to 25 are cleaved as a signal peptide; the sequence is MKNMIYNLISISLYSLIIILTDIYA. GDP-beta-L-fucose contacts are provided by residues 59 to 63, 283 to 285, and 379 to 380; these read GEGFN, HLR, and RF. E60 functions as the Proton acceptor in the catalytic mechanism.

Belongs to the glycosyltransferase 68 family.

The protein resides in the endoplasmic reticulum. It catalyses the reaction L-seryl-[protein] + GDP-beta-L-fucose = 3-O-(alpha-L-fucosyl)-L-seryl-[protein] + GDP + H(+). It carries out the reaction L-threonyl-[protein] + GDP-beta-L-fucose = 3-O-(alpha-L-fucosyl)-L-threonyl-[protein] + GDP + H(+). Its pathway is protein modification; protein glycosylation. Catalyzes the reaction that attaches fucose through an O-glycosidic linkage to a conserved serine or threonine residue in the consensus sequence C1-X-X-S/T-C2 of thrombospondin type I repeats (TSRs) where C1 and C2 are the first and second cysteines of the repeat, respectively. O-fucosylates sporozoite proteins CSP and TRAP. O-fucosylation regulates stability and intracellular trafficking of TRAP but not of CSP. Dispensable for parasite transmission to the mosquito vector and/or infection of the vertebrate host hepatocytes. The sequence is that of GDP-fucose protein O-fucosyltransferase 2 from Plasmodium berghei (strain Anka).